Consider the following 428-residue polypeptide: MRFLTGNVVVRARGADFFVAIDARSAGGADAWLALTNGAPLLRRFTLSPSAPTNLYDFTRAELRLWLSRRELNPVHAARIWSYLYLDLVEGFGAMTELPARVRARLEAEMCVGNLKIARETDSRDGFTRKYLLELADGAAIETVLMRFAGRATACVSSQVGCAMGCVFCATGQMGYTRHLTAGEIVAQAVHVARALRTAAFEKCHVMRDPSPGREAGEKSRDEADRHRAPPTPRLRNLVLMGMGEPLHNYEAVMRAVDILRDDGGLALGAERITLSTVGVVPGILRLAAEKRPVHLAVSLHAADQEERAALVPVAKKWPLDELMAACRTYSETTGRRVFYEWTLIEGRNDTAAHARAVGRLLRGLPAQVNLIPLNPTAGYDGTPGRTEAARRFQEILSREFALPSTVRQRRGIDIAAGCGQLAVAEQS.

Glu142 acts as the Proton acceptor in catalysis. The region spanning 148–414 (FAGRATACVS…STVRQRRGID (267 aa)) is the Radical SAM core domain. Cys155 and Cys419 are oxidised to a cystine. [4Fe-4S] cluster is bound by residues Cys162, Cys166, and Cys169. The segment covering 207 to 228 (MRDPSPGREAGEKSRDEADRHR) has biased composition (basic and acidic residues). The interval 207-232 (MRDPSPGREAGEKSRDEADRHRAPPT) is disordered. Residues 244-245 (GE), Ser276, 299-301 (SLH), and Asn375 each bind S-adenosyl-L-methionine. Residue Cys419 is the S-methylcysteine intermediate of the active site.

The protein belongs to the radical SAM superfamily. RlmN family. It depends on [4Fe-4S] cluster as a cofactor.

It localises to the cytoplasm. It carries out the reaction adenosine(2503) in 23S rRNA + 2 reduced [2Fe-2S]-[ferredoxin] + 2 S-adenosyl-L-methionine = 2-methyladenosine(2503) in 23S rRNA + 5'-deoxyadenosine + L-methionine + 2 oxidized [2Fe-2S]-[ferredoxin] + S-adenosyl-L-homocysteine. It catalyses the reaction adenosine(37) in tRNA + 2 reduced [2Fe-2S]-[ferredoxin] + 2 S-adenosyl-L-methionine = 2-methyladenosine(37) in tRNA + 5'-deoxyadenosine + L-methionine + 2 oxidized [2Fe-2S]-[ferredoxin] + S-adenosyl-L-homocysteine. Functionally, specifically methylates position 2 of adenine 2503 in 23S rRNA and position 2 of adenine 37 in tRNAs. The protein is Probable dual-specificity RNA methyltransferase RlmN 2 of Opitutus terrae (strain DSM 11246 / JCM 15787 / PB90-1).